The chain runs to 349 residues: Farnesyl pyrophosphate synthase vrtD (349 aa).

The isopentenyl diphosphate site is built by lysine 53, arginine 56, and glutamine 92. Residues aspartate 99 and aspartate 103 each contribute to the Mg(2+) site. Arginine 108 serves as a coordination point for dimethylallyl diphosphate. Arginine 109 is a binding site for isopentenyl diphosphate. Residues lysine 196, threonine 197, glutamine 236, lysine 253, and lysine 262 each contribute to the dimethylallyl diphosphate site.

It belongs to the FPP/GGPP synthase family. Mg(2+) is required as a cofactor.

It carries out the reaction isopentenyl diphosphate + dimethylallyl diphosphate = (2E)-geranyl diphosphate + diphosphate. The enzyme catalyses isopentenyl diphosphate + (2E)-geranyl diphosphate = (2E,6E)-farnesyl diphosphate + diphosphate. The protein operates within secondary metabolite biosynthesis; terpenoid biosynthesis. Functionally, farnesyl pyrophosphate synthase; part of the gene cluster that mediates the biosynthesis of viridicatumtoxin, a tetracycline-like fungal meroterpenoid with a unique, fused spirobicyclic ring system. The first step of the pathway is the production of the malonamoyl-CoA starter unit for the polyketide synthase vrtA. The aldolase vrtJ may be involved in the synthesis of the malonamate substrate for malonamoyl-CoA synthetase vrtB. The polyketide synthase vrtA then may utilize the malonamoyl-CoA starter unit, followed by sequential condensation of eight malonyl-CoA units to form the polyketide backbone. The cyclization of the last ring could be mediated by the lactamase-like protein vrtG. The proposed post-PKS tailoring steps are a hydroxylation at C5 catalyzed the cytochrome P450 monooxygenase vrtE, a hydroxylation at C12a catalyzed by VrtH and/or VrtI, and an O-methylation by the O-methyltransferase vrtF. VrtC is then proposed to catalyze the transfer of a geranyl group synthesized by vrtD to the aromatic C ring of the tetracyclic polyketide intermediate of viridicatumtoxin to yield previridicatumtoxin. Finally, the cytochrome P450 monooxygenase vrtK catalyzes the spirocyclization of the geranyl moiety of previridicatumtoxin to afford viridicatumtoxin. The sequence is that of Farnesyl pyrophosphate synthase vrtD from Penicillium aethiopicum.